The chain runs to 402 residues: Proline-rich protein 25 (402 aa).

3 disordered regions span residues 1 to 29 (MART…AAAH), 109 to 255 (TVPG…MVGS), and 337 to 371 (EAAQ…CPGR). A compositionally biased stretch (low complexity) spans 345–355 (RRTAPPRRTAS). The segment covering 356 to 367 (PEPPAPGAPLPA) has biased composition (pro residues).

This Homo sapiens (Human) protein is Proline-rich protein 25 (PRR25).